The primary structure comprises 1042 residues: Protein phosphatase Slingshot homolog 1 (1042 aa).

Polar residues predominate over residues 1–12 (MALVTLQRSPTP). Positions 1 to 29 (MALVTLQRSPTPSAASSSASNSELEAGSD) are disordered. Position 2 is an N-acetylalanine (A2). Positions 13-22 (SAASSSASNS) are enriched in low complexity. A phosphoserine mark is found at S37 and S57. The region spanning 249–304 (ERTERLIKAKLRSIMMSQDLENVTSKEIRNELEKQMNCNLKEFKEFIDNEMLLILG) is the DEK-C domain. One can recognise a Tyrosine-protein phosphatase domain in the interval 308 to 449 (KPSLIFDHLY…LSEYEGILDA (142 aa)). The Phosphocysteine intermediate role is filled by C393. S516 is modified (phosphoserine). 4 disordered regions span residues 576 to 609 (FGNSKPRSDSLPQVEELEKDGSPRTGRWRRASTQ), 668 to 766 (MERH…PHCD), 858 to 900 (IPEE…LDHT), and 915 to 942 (PTSSSISSNLTRSSSSDSIHSVRGKPGL). A compositionally biased stretch (polar residues) spans 675 to 693 (SSSAICTQPTFLPHVTSSP). Over residues 697 to 712 (ASSRSRAPERPASGPA) the composition is skewed to low complexity. Positions 886–900 (LQKSPTSTLPRLDHT) are enriched in polar residues. S889 is subject to Phosphoserine. Residues 889 to 1042 (SPTSTLPRLD…LKSPSRVNKS (154 aa)) form an interaction with YWHAG region. A compositionally biased stretch (low complexity) spans 917–935 (SSSISSNLTRSSSSDSIHS). Phosphoserine is present on S970. Polar residues predominate over residues 985–995 (SSEADTSTIAD). Residues 985-1042 (SSEADTSTIADSQDAKCGLSSSFLPEPQSAPRDPAATSKSSGKSAPEHLKSPSRVNKS) are disordered.

Belongs to the protein-tyrosine phosphatase family. In terms of assembly, interacts with the 14-3-3 proteins YWHAB, YWHAG, YWHAQ, and YWHAZ. Interaction with 14-3-3 proteins inhibits phosphatase activity and also blocks recruitment to lamellipodia and stimulation by actin. Interacts with actin and this stimulates phosphatase activity. Interacts with LIMK1. In terms of processing, phosphorylated. Inhibitory phosphorylation by PAK4 promotes binding to YWHAZ. Phosphorylation at Ser-970 is decreased by stimuli which promote actin reorganization and lamellipodia formation. Can be dephosphorylated and activated by PPP3CA/calcineurin A. Phosphorylation decreases immediately prior to telophase. As to expression, expressed in brain, heart, kidney and thymus. Also expressed at lower levels in liver, skeletal muscle, small intestine and spleen.

It is found in the cytoplasm. The protein localises to the cytoskeleton. It localises to the cleavage furrow. Its subcellular location is the midbody. It carries out the reaction O-phospho-L-tyrosyl-[protein] + H2O = L-tyrosyl-[protein] + phosphate. It catalyses the reaction O-phospho-L-seryl-[protein] + H2O = L-seryl-[protein] + phosphate. The enzyme catalyses O-phospho-L-threonyl-[protein] + H2O = L-threonyl-[protein] + phosphate. Functionally, protein phosphatase which regulates actin filament dynamics. Dephosphorylates and activates the actin binding/depolymerizing factor cofilin, which subsequently binds to actin filaments and stimulates their disassembly. Inhibitory phosphorylation of cofilin is mediated by LIMK1, which may also be dephosphorylated and inactivated by this protein. The sequence is that of Protein phosphatase Slingshot homolog 1 from Mus musculus (Mouse).